The primary structure comprises 157 residues: Major allergen Alt a 1 (157 aa).

The N-terminal stretch at 1–18 is a signal peptide; that stretch reads MQFTTIASLFAAAGLAAA. The AA1-like domain maps to 35-153; it reads EGDYVWKISE…ADAYITLVTL (119 aa). Cystine bridges form between C74–C89 and C128–C140.

The protein belongs to the ALTA1 family. Homodimer; disulfide-linked.

Its subcellular location is the spore wall. It localises to the secreted. Its function is as follows. May bind and inhibit the beta-glucanase activity of host plant thaumatin-like proteins. The polypeptide is Major allergen Alt a 1 (ALTA1) (Alternaria alternata (Alternaria rot fungus)).